A 648-amino-acid chain; its full sequence is Probable potassium transport system protein Kup 1 (648 aa).

12 helical membrane passes run 25–45, 57–77, 113–133, 153–173, 184–204, 219–239, 263–283, 312–332, 362–382, 391–411, 417–437, and 446–466; these read LTLGALGVVFGDIGTSPIYAF, IVAGEILGVLSLALWALILVV, LVMALGAIGAALFYGDGVITP, SVSRGEILLITSAILIGLFLM, LFGPVCLVWFVTIGGIGLIHI, GVLFMANHGVAGMFVMGAVFL, WLAIVFPALALNYLGQGAFAL, IPLVILATCATVIASQAVITG, IYLPTITMLLFVGVMVLVLGF, AYGVSVSGTMVVTTCLAFLVV, WGWPLTVAVIVPLLLLDLFFF, and EGGWVPLIVAGGVGLLIVTWV.

The protein belongs to the HAK/KUP transporter (TC 2.A.72) family.

It is found in the cell inner membrane. The catalysed reaction is K(+)(in) + H(+)(in) = K(+)(out) + H(+)(out). Transport of potassium into the cell. Likely operates as a K(+):H(+) symporter. This Rhizorhabdus wittichii (strain DSM 6014 / CCUG 31198 / JCM 15750 / NBRC 105917 / EY 4224 / RW1) (Sphingomonas wittichii) protein is Probable potassium transport system protein Kup 1.